The primary structure comprises 344 residues: Probable dual-specificity RNA methyltransferase RlmN (344 aa).

The Proton acceptor role is filled by E89. The region spanning 95 to 329 is the Radical SAM core domain; the sequence is TDQRLTVCVS…VSLRASRGLD (235 aa). C102 and C334 are joined by a disulfide. The [4Fe-4S] cluster site is built by C109, C113, and C116. Residues 156–157, S186, 215–217, and N291 each bind S-adenosyl-L-methionine; these read GE and SLH. The active-site S-methylcysteine intermediate is the C334.

The protein belongs to the radical SAM superfamily. RlmN family. Requires [4Fe-4S] cluster as cofactor.

The protein resides in the cytoplasm. The catalysed reaction is adenosine(2503) in 23S rRNA + 2 reduced [2Fe-2S]-[ferredoxin] + 2 S-adenosyl-L-methionine = 2-methyladenosine(2503) in 23S rRNA + 5'-deoxyadenosine + L-methionine + 2 oxidized [2Fe-2S]-[ferredoxin] + S-adenosyl-L-homocysteine. The enzyme catalyses adenosine(37) in tRNA + 2 reduced [2Fe-2S]-[ferredoxin] + 2 S-adenosyl-L-methionine = 2-methyladenosine(37) in tRNA + 5'-deoxyadenosine + L-methionine + 2 oxidized [2Fe-2S]-[ferredoxin] + S-adenosyl-L-homocysteine. Functionally, specifically methylates position 2 of adenine 2503 in 23S rRNA and position 2 of adenine 37 in tRNAs. The chain is Probable dual-specificity RNA methyltransferase RlmN from Parasynechococcus marenigrum (strain WH8102).